The chain runs to 222 residues: Octanoyltransferase (222 aa).

In terms of domain architecture, BPL/LPL catalytic spans 34 to 214 (GEAPSTVLLL…EFRKHEEALV (181 aa)). Substrate is bound by residues 72–79 (RGGKLTWH), 144–146 (AIG), and 157–159 (GVA). Catalysis depends on cysteine 175, which acts as the Acyl-thioester intermediate.

Belongs to the LipB family.

Its subcellular location is the cytoplasm. The catalysed reaction is octanoyl-[ACP] + L-lysyl-[protein] = N(6)-octanoyl-L-lysyl-[protein] + holo-[ACP] + H(+). It participates in protein modification; protein lipoylation via endogenous pathway; protein N(6)-(lipoyl)lysine from octanoyl-[acyl-carrier-protein]: step 1/2. In terms of biological role, catalyzes the transfer of endogenously produced octanoic acid from octanoyl-acyl-carrier-protein onto the lipoyl domains of lipoate-dependent enzymes. Lipoyl-ACP can also act as a substrate although octanoyl-ACP is likely to be the physiological substrate. The sequence is that of Octanoyltransferase from Pseudarthrobacter chlorophenolicus (strain ATCC 700700 / DSM 12829 / CIP 107037 / JCM 12360 / KCTC 9906 / NCIMB 13794 / A6) (Arthrobacter chlorophenolicus).